The sequence spans 221 residues: Crossover junction endodeoxyribonuclease RuvC (221 aa).

Active-site residues include Asp12, Glu73, and Asp146. 3 residues coordinate Mg(2+): Asp12, Glu73, and Asp146. A disordered region spans residues 169 to 221; sequence SQYSEQELEKRRRVQQGKLGKAKSTYNAEQAQSHASDPAKAAHPSQFQRTDTN. The span at 192–203 shows a compositional bias: polar residues; that stretch reads STYNAEQAQSHA.

Belongs to the RuvC family. In terms of assembly, homodimer which binds Holliday junction (HJ) DNA. The HJ becomes 2-fold symmetrical on binding to RuvC with unstacked arms; it has a different conformation from HJ DNA in complex with RuvA. In the full resolvosome a probable DNA-RuvA(4)-RuvB(12)-RuvC(2) complex forms which resolves the HJ. Mg(2+) serves as cofactor.

Its subcellular location is the cytoplasm. It carries out the reaction Endonucleolytic cleavage at a junction such as a reciprocal single-stranded crossover between two homologous DNA duplexes (Holliday junction).. The RuvA-RuvB-RuvC complex processes Holliday junction (HJ) DNA during genetic recombination and DNA repair. Endonuclease that resolves HJ intermediates. Cleaves cruciform DNA by making single-stranded nicks across the HJ at symmetrical positions within the homologous arms, yielding a 5'-phosphate and a 3'-hydroxyl group; requires a central core of homology in the junction. The consensus cleavage sequence is 5'-(A/T)TT(C/G)-3'. Cleavage occurs on the 3'-side of the TT dinucleotide at the point of strand exchange. HJ branch migration catalyzed by RuvA-RuvB allows RuvC to scan DNA until it finds its consensus sequence, where it cleaves and resolves the cruciform DNA. This chain is Crossover junction endodeoxyribonuclease RuvC, found in Corynebacterium glutamicum (strain ATCC 13032 / DSM 20300 / JCM 1318 / BCRC 11384 / CCUG 27702 / LMG 3730 / NBRC 12168 / NCIMB 10025 / NRRL B-2784 / 534).